The sequence spans 390 residues: Succinate--CoA ligase [ADP-forming] subunit beta (390 aa).

An ATP-grasp domain is found at 9-245; that stretch reads KHLLKKYNIP…TTQEDEHETM (237 aa). ATP contacts are provided by residues K46, 53–55, E99, S102, and E107; that span reads GRG. Positions 200 and 214 each coordinate Mg(2+). Residues N265 and 322–324 contribute to the substrate site; that span reads GIV.

It belongs to the succinate/malate CoA ligase beta subunit family. Heterotetramer of two alpha and two beta subunits. Mg(2+) is required as a cofactor.

The enzyme catalyses succinate + ATP + CoA = succinyl-CoA + ADP + phosphate. It carries out the reaction GTP + succinate + CoA = succinyl-CoA + GDP + phosphate. The protein operates within carbohydrate metabolism; tricarboxylic acid cycle; succinate from succinyl-CoA (ligase route): step 1/1. In terms of biological role, succinyl-CoA synthetase functions in the citric acid cycle (TCA), coupling the hydrolysis of succinyl-CoA to the synthesis of either ATP or GTP and thus represents the only step of substrate-level phosphorylation in the TCA. The beta subunit provides nucleotide specificity of the enzyme and binds the substrate succinate, while the binding sites for coenzyme A and phosphate are found in the alpha subunit. In Coxiella burnetii (strain CbuK_Q154) (Coxiella burnetii (strain Q154)), this protein is Succinate--CoA ligase [ADP-forming] subunit beta.